A 364-amino-acid chain; its full sequence is D-alanine--D-alanine ligase (364 aa).

An ATP-grasp domain is found at 134–344 (KVLLKSFNIP…YESLVDKLIT (211 aa)). 167-222 (NNKLNYPVIVKPSVLGSSIGINVAYNVSQIEKYIEEAFEYDLTVVVEKFIKAREIE) contributes to the ATP binding site. Residues Asp-297, Glu-311, and Asn-313 each contribute to the Mg(2+) site.

Belongs to the D-alanine--D-alanine ligase family. Mg(2+) is required as a cofactor. It depends on Mn(2+) as a cofactor.

Its subcellular location is the cytoplasm. It catalyses the reaction 2 D-alanine + ATP = D-alanyl-D-alanine + ADP + phosphate + H(+). It functions in the pathway cell wall biogenesis; peptidoglycan biosynthesis. In terms of biological role, cell wall formation. This is D-alanine--D-alanine ligase from Borrelia duttonii (strain Ly).